The primary structure comprises 127 residues: MYRTLMSAKLHRARVTEANLNYVGSVTIDEDLLDAVGMMANEKVQIVNNNNGARLETYIIPGERGSGVVCLNGAAARLVQVGDVVIIVSYAMMSEEEAKTHKPKVAVLNERNEIEEMLGQEPARTIL.

Serine 25 serves as the catalytic Schiff-base intermediate with substrate; via pyruvic acid. Serine 25 is subject to Pyruvic acid (Ser). Threonine 57 serves as a coordination point for substrate. Tyrosine 58 (proton donor) is an active-site residue. A substrate-binding site is contributed by 73–75 (GAA).

The protein belongs to the PanD family. Heterooctamer of four alpha and four beta subunits. It depends on pyruvate as a cofactor. Post-translationally, is synthesized initially as an inactive proenzyme, which is activated by self-cleavage at a specific serine bond to produce a beta-subunit with a hydroxyl group at its C-terminus and an alpha-subunit with a pyruvoyl group at its N-terminus.

The protein localises to the cytoplasm. The catalysed reaction is L-aspartate + H(+) = beta-alanine + CO2. The protein operates within cofactor biosynthesis; (R)-pantothenate biosynthesis; beta-alanine from L-aspartate: step 1/1. Functionally, catalyzes the pyruvoyl-dependent decarboxylation of aspartate to produce beta-alanine. This is Aspartate 1-decarboxylase from Bacillus licheniformis (strain ATCC 14580 / DSM 13 / JCM 2505 / CCUG 7422 / NBRC 12200 / NCIMB 9375 / NCTC 10341 / NRRL NRS-1264 / Gibson 46).